We begin with the raw amino-acid sequence, 468 residues long: Monogalactosyldiacylglycerol synthase 2, chloroplastic (468 aa).

Residues His82, Arg251, 361–365 (GTIAE), and Glu383 contribute to the UDP site.

This sequence belongs to the glycosyltransferase 28 family. As to expression, expressed mainly in floral buds. Detected in roots, leaves, stems, siliques and pollen tubes.

Its subcellular location is the plastid. It is found in the chloroplast outer membrane. The catalysed reaction is a 1,2-diacyl-sn-glycerol + UDP-alpha-D-galactose = a 1,2-diacyl-3-O-(beta-D-galactosyl)-sn-glycerol + UDP + H(+). It catalyses the reaction 1,2-di-(9Z,12Z-octadecadienoyl)-sn-glycerol + UDP-alpha-D-galactose = 1,2-di-(9Z,12Z-octadecadienoyl)-3-beta-D-galactosyl-sn-glycerol + UDP + H(+). The enzyme catalyses 1-(9Z-octadecenoyl)-2-hexadecanoyl-sn-glycerol + UDP-alpha-D-galactose = 1-(9Z-octadecenoyl)-2-hexadecanoyl-3-beta-D-galactosyl-sn-glycerol + UDP + H(+). It carries out the reaction 1,2-di-(9Z-octadecenoyl)-sn-glycerol + UDP-alpha-D-galactose = 1,2-di-(9Z-octadecenoyl)-3-beta-D-galactosyl-sn-glycerol + UDP + H(+). With respect to regulation, inhibited by galvestine-1. Involved in the synthesis of monogalactosyldiacylglycerol, the major structural component of photosynthetic membranes and in the chloroplast envelope biogenesis. Can use both prokaryotic (18:1/16:0) or eukaryotic (18:2/18:2) 1,2-diacylglycerol species, but operates with some preference for the eukaryotic one. Plays a minor role in galactolipid synthesis in chloroplasts. Is required for membrane lipid remodeling in phosphate-starved roots. Acts as the minor factor involved in digalactosyldiacylglycerol (DGDG) biosynthesis in phosphate-starved roots. Does not seem to be required for plant growth under nutrient-sufficient conditions. Required for membrane lipid remodeling in plants grown in acidic conditions. This is Monogalactosyldiacylglycerol synthase 2, chloroplastic from Arabidopsis thaliana (Mouse-ear cress).